Consider the following 95-residue polypeptide: Small ribosomal subunit protein bS6 (95 aa).

This sequence belongs to the bacterial ribosomal protein bS6 family. In terms of assembly, part of the 30S ribosomal subunit.

Functionally, binds together with bS18 to 16S ribosomal RNA. This is Small ribosomal subunit protein bS6 (rpsF) from Bacillus subtilis (strain 168).